The chain runs to 772 residues: MGDEDDDESCAVELRITEANLTGHEEKVSVENFELLKVLGTGAYGKVFLVRKAGGHDAGKLYAMKVLRKAALVQRAKTQEHTRTERSVLELVRQAPFLVTLHYAFQTDAKLHLILDYVSGGEMFTHLYQRQYFKEAEVRVYGGEIVLALEHLHKLGIIYRDLKLENVLLDSEGHIVLTDFGLSKEFLTEEKERTFSFCGTIEYMAPEIIRSKTGHGKAVDWWSLGILLFELLTGASPFTLEGERNTQAEVSRRILKCSPPFPPRIGPVAQDLLQRLLCKDPKKRLGAGPQGAQEVRNHPFFQGLDWVALAARKIPAPFRPQIRSELDVGNFAEEFTRLEPVYSPPGSPPPGDPRIFQGYSFVAPSILFDHNNAVMTDGLEAPGAGDRPGRAAVARSAMMQDSPFFQQYELDLREPALGQGSFSVCRRCRQRQSGQEFAVKILSRRLEANTQREVAALRLCQSHPNVVNLHEVHHDQLHTYLVLELLRGGELLEHIRKKRHFSESEASQILRSLVSAVSFMHEEAGVVHRDLKPENILYADDTPGAPVKIIDFGFARLRPQSPGVPMQTPCFTLQYAAPELLAQQGYDESCDLWSLGVILYMMLSGQVPFQGASGQGGQSQAAEIMCKIREGRFSLDGEAWQGVSEEAKELVRGLLTVDPAKRLKLEGLRGSSWLQDGSARSSPPLRTPDVLESSGPAVRSGLNATFMAFNRGKREGFFLKSVENAPLAKRRKQKLRSATASRRGSPAPANPGRAPVASKGAPRRANGPLPPS.

Residues 33–301 form the Protein kinase 1 domain; that stretch reads FELLKVLGTG…AQEVRNHPFF (269 aa). Residues 39 to 47 and Lys65 each bind ATP; that span reads LGTGAYGKV. The active-site Proton acceptor is the Asp161. Ser196 is modified (phosphoserine; by autocatalysis). The AGC-kinase C-terminal domain maps to 302–371; that stretch reads QGLDWVALAA…VAPSILFDHN (70 aa). Ser343 bears the Phosphoserine; by MAPK1, MAPK3 and MAPK14 mark. The residue at position 347 (Ser347) is a Phosphoserine. 2 positions are modified to phosphoserine; by autocatalysis: Ser360 and Ser365. The Protein kinase 2 domain occupies 411–674; sequence DLREPALGQG…LEGLRGSSWL (264 aa). ATP is bound by residues 417–425 and Lys440; that span reads LGQGSFSVC. Catalysis depends on Asp530, which acts as the Proton acceptor. Thr542 carries the post-translational modification Phosphothreonine. A Phosphothreonine; by MAPK1, MAPK3 and MAPK14 modification is found at Thr568. Phosphoserine occurs at positions 634 and 678. Disordered stretches follow at residues 673-696 and 728-772; these read WLQD…SSGP and AKRR…LPPS. Thr687 carries the post-translational modification Phosphothreonine. Residues 725-772 form a required for nuclear targeting and association with MAPK14 region; it reads APLAKRRKQKLRSATASRRGSPAPANPGRAPVASKGAPRRANGPLPPS. Ser737 is subject to Phosphoserine; by autocatalysis. A Phosphoserine modification is found at Ser745.

This sequence belongs to the protein kinase superfamily. AGC Ser/Thr protein kinase family. S6 kinase subfamily. In terms of assembly, forms a complex with either MAPK1/ERK2 or MAPK3/ERK1 in quiescent cells which transiently dissociates following mitogenic stimulation. Also associates with MAPK14/p38-alpha. Activated RPS6KA4 associates with and phosphorylates the NF-kappa-B p65 subunit RELA. It depends on Mg(2+) as a cofactor. Post-translationally, ser-343 and Thr-568 phosphorylation is required for kinase activity. Ser-343 and Ser-196 are autophosphorylated by the C-terminal kinase domain, and their phosphorylation is essential for the catalytic activity of the N-terminal kinase domain. Phosphorylated at Ser-343, Thr-568 and Thr-687 by MAPK1/ERK2, MAPK3/ERK1 and MAPK14/p38-alpha. Autophosphorylated at Ser-737 and Ser-745 by the N-terminal kinase domain.

The protein localises to the nucleus. The enzyme catalyses L-seryl-[protein] + ATP = O-phospho-L-seryl-[protein] + ADP + H(+). The catalysed reaction is L-threonyl-[protein] + ATP = O-phospho-L-threonyl-[protein] + ADP + H(+). Its activity is regulated as follows. Activated by phosphorylation at Ser-343, Thr-568 and Thr-687 by MAPK1/ERK2, MAPK3/ERK1 and MAPK14/p38-alpha, and by further autophosphorylation of Ser-196, Ser-360 and Ser-365 by the activated C-terminal kinase domain. Functionally, serine/threonine-protein kinase that is required for the mitogen or stress-induced phosphorylation of the transcription factors CREB1 and ATF1 and for the regulation of the transcription factor RELA, and that contributes to gene activation by histone phosphorylation and functions in the regulation of inflammatory genes. Phosphorylates CREB1 and ATF1 in response to mitogenic or stress stimuli such as UV-C irradiation, epidermal growth factor (EGF) and anisomycin. Plays an essential role in the control of RELA transcriptional activity in response to TNF. Phosphorylates 'Ser-10' of histone H3 in response to mitogenics, stress stimuli and EGF, which results in the transcriptional activation of several immediate early genes, including proto-oncogenes c-fos/FOS and c-jun/JUN. May also phosphorylate 'Ser-28' of histone H3. Mediates the mitogen- and stress-induced phosphorylation of high mobility group protein 1 (HMGN1/HMG14). In lipopolysaccharide-stimulated primary macrophages, acts downstream of the Toll-like receptor TLR4 to limit the production of pro-inflammatory cytokines. Functions probably by inducing transcription of the MAP kinase phosphatase DUSP1 and the anti-inflammatory cytokine interleukin 10 (IL10), via CREB1 and ATF1 transcription factors. The protein is Ribosomal protein S6 kinase alpha-4 (RPS6KA4) of Homo sapiens (Human).